The chain runs to 459 residues: MKLWGGRFAKGTDKLVDDFNSSIRFDSRMYRHDILGSIAHANMLGKCGIISADESSLIQSSLKNILNDIEAGKIDFEIDAEDIHMNVEKILISRIGDTGKKLHTGRSRNDQVALDIRMYLRDEIISIKEMVAVLLNTLVKMSESNLDTIMPGYTHLQRAQPITLAHHMMAYFEMFKRDYQRLCDCYSRMNILPLGSGALAGTTYPLDRYMVAQELGFDDVTSNSLDGVSDRDFAIELASCLSILMMHLSRLSEEVILWSSHEFSFVELDDAYSTGSSIMPQKKNPDVAELARGKTGRVYGSLMTLLTVMKSLPLAYNKDMQEDKEAIFDAVDTVKMCLPVFSNMIGTMKVRKENMYKAAQGGFTNATDIADYLVKKGIPFRTAHEIIGKMVLYCIENSKAIDDMTMEEFKSFSDKIQEDVYTEISLEKCVSGRKLVGGPARETEEKAIENAKSFLSSLD.

The protein belongs to the lyase 1 family. Argininosuccinate lyase subfamily.

The protein localises to the cytoplasm. It catalyses the reaction 2-(N(omega)-L-arginino)succinate = fumarate + L-arginine. It functions in the pathway amino-acid biosynthesis; L-arginine biosynthesis; L-arginine from L-ornithine and carbamoyl phosphate: step 3/3. The protein is Argininosuccinate lyase of Ruminiclostridium cellulolyticum (strain ATCC 35319 / DSM 5812 / JCM 6584 / H10) (Clostridium cellulolyticum).